The following is a 262-amino-acid chain: Glutamine-binding protein (262 aa).

Positions 1 to 26 (MKRKTVWKIWITLALIALLSITALAG) are cleaved as a signal peptide. The N-palmitoyl cysteine moiety is linked to residue C27. Residue C27 is the site of S-diacylglycerol cysteine attachment.

This sequence belongs to the bacterial solute-binding protein 3 family.

The protein resides in the cell membrane. Functionally, involved in glutamine-transport system. Interacts with the glutamine-transport system GlnPQ. The protein is Glutamine-binding protein (glnH) of Geobacillus stearothermophilus (Bacillus stearothermophilus).